Reading from the N-terminus, the 549-residue chain is Glucose-6-phosphate isomerase (549 aa).

E355 (proton donor) is an active-site residue. Active-site residues include H386 and K514.

The protein belongs to the GPI family.

Its subcellular location is the cytoplasm. The catalysed reaction is alpha-D-glucose 6-phosphate = beta-D-fructose 6-phosphate. It participates in carbohydrate biosynthesis; gluconeogenesis. It functions in the pathway carbohydrate degradation; glycolysis; D-glyceraldehyde 3-phosphate and glycerone phosphate from D-glucose: step 2/4. Functionally, catalyzes the reversible isomerization of glucose-6-phosphate to fructose-6-phosphate. In Salmonella agona (strain SL483), this protein is Glucose-6-phosphate isomerase.